The sequence spans 330 residues: Endo-1,4-beta-xylanase (330 aa).

The GH10 domain occupies 2–330 (CSSIPSLREV…KPAFWRVVNI (329 aa)). E133 acts as the Proton donor in catalysis. Residue E240 is the Nucleophile of the active site.

It belongs to the glycosyl hydrolase 10 (cellulase F) family. Cytoplasmic xylanase subfamily.

Its subcellular location is the cytoplasm. The catalysed reaction is Endohydrolysis of (1-&gt;4)-beta-D-xylosidic linkages in xylans.. It functions in the pathway glycan degradation; xylan degradation. This chain is Endo-1,4-beta-xylanase (xynA), found in Geobacillus stearothermophilus (Bacillus stearothermophilus).